Reading from the N-terminus, the 623-residue chain is Chaperone protein DnaK (623 aa).

A Phosphothreonine; by autocatalysis modification is found at T197. Residues 595-615 show a composition bias toward basic and acidic residues; sequence AENMYKKDEPNTANDKKKKDD. The segment at 595-623 is disordered; sequence AENMYKKDEPNTANDKKKKDDDVIDAEVE.

It belongs to the heat shock protein 70 family.

Acts as a chaperone. The polypeptide is Chaperone protein DnaK (Campylobacter jejuni subsp. jejuni serotype O:6 (strain 81116 / NCTC 11828)).